The following is a 164-amino-acid chain: Protein-export protein SecB (164 aa).

Belongs to the SecB family. As to quaternary structure, homotetramer, a dimer of dimers. One homotetramer interacts with 1 SecA dimer.

It is found in the cytoplasm. In terms of biological role, one of the proteins required for the normal export of preproteins out of the cell cytoplasm. It is a molecular chaperone that binds to a subset of precursor proteins, maintaining them in a translocation-competent state. It also specifically binds to its receptor SecA. In Stutzerimonas stutzeri (strain A1501) (Pseudomonas stutzeri), this protein is Protein-export protein SecB.